Here is a 418-residue protein sequence, read N- to C-terminus: Deubiquitinase and deneddylase Dub1 (418 aa).

Positions 1-11 are enriched in polar residues; that stretch reads MLSPTNSTSKT. Positions 1-23 are disordered; that stretch reads MLSPTNSTSKTAPVPPQDSSKPV. The helical transmembrane segment at 40–60 threads the bilayer; that stretch reads TALVVLLVVVTLGLILLFYSF. The tract at residues 72–145 is disordered; the sequence is TRPSTKEQPT…LPPKAPKPVK (74 aa). The span at 86-141 shows a compositional bias: pro residues; it reads VPLPSPPLAVPRPSTPPPPVISRPSMPPAPTPAISPPSTPSAPKPSTPPPLPPKAP. Residues H288, D305, and C358 contribute to the active site.

Belongs to the peptidase C48 family.

The protein localises to the secreted. It localises to the host cell. The protein resides in the membrane. Functionally, effector proteins function to alter host cell physiology and promote bacterial survival in host tissues. This protease possesses deubiquitinating and deneddylating activities. This is Deubiquitinase and deneddylase Dub1 (cdu1) from Chlamydia trachomatis serovar E (strain Sweden2).